A 258-amino-acid polypeptide reads, in one-letter code: Trypsin eta (258 aa).

A signal peptide spans 1–22; sequence MNKVILRILALLFLLGIGAVSA. Residues 23 to 27 constitute a propeptide, activation peptide; sequence QPDGR. A Peptidase S1 domain is found at 28-258; the sequence is IVGGADTTNY…YFKDWIASRV (231 aa). C59 and C75 form a disulfide bridge. Active-site charge relay system residues include H74 and D120. Disulfide bonds link C185–C200 and C211–C235. S215 acts as the Charge relay system in catalysis.

Belongs to the peptidase S1 family.

The protein resides in the secreted. It localises to the extracellular space. The enzyme catalyses Preferential cleavage: Arg-|-Xaa, Lys-|-Xaa.. This Drosophila erecta (Fruit fly) protein is Trypsin eta (etaTry).